The following is a 91-amino-acid chain: Probable Fe(2+)-trafficking protein (91 aa).

This sequence belongs to the Fe(2+)-trafficking protein family.

Functionally, could be a mediator in iron transactions between iron acquisition and iron-requiring processes, such as synthesis and/or repair of Fe-S clusters in biosynthetic enzymes. This chain is Probable Fe(2+)-trafficking protein, found in Actinobacillus pleuropneumoniae serotype 5b (strain L20).